Consider the following 544-residue polypeptide: CTP synthase (544 aa).

Residues 1–266 form an amidoligase domain region; that stretch reads MKYIFVTGGV…GKAVEELLGL (266 aa). Ser12 contacts CTP. Ser12 contacts UTP. 13 to 18 is an ATP binding site; the sequence is SLGKGV. Tyr53 lines the L-glutamine pocket. Asp70 provides a ligand contact to ATP. Asp70 and Glu140 together coordinate Mg(2+). Residues 147–149, 187–192, and Lys223 each bind CTP; these read DIE and KTKPTQ. Residues 187–192 and Lys223 contribute to the UTP site; that span reads KTKPTQ. A Glutamine amidotransferase type-1 domain is found at 291–544; it reads TIAIAGKYTA…VKAALEHQQQ (254 aa). Gly356 is a binding site for L-glutamine. Catalysis depends on Cys383, which acts as the Nucleophile; for glutamine hydrolysis. L-glutamine contacts are provided by residues 384-387, Glu407, and Arg467; that span reads LGMQ. Residues His517 and Glu519 contribute to the active site.

This sequence belongs to the CTP synthase family. Homotetramer.

It catalyses the reaction UTP + L-glutamine + ATP + H2O = CTP + L-glutamate + ADP + phosphate + 2 H(+). The enzyme catalyses L-glutamine + H2O = L-glutamate + NH4(+). It carries out the reaction UTP + NH4(+) + ATP = CTP + ADP + phosphate + 2 H(+). Its pathway is pyrimidine metabolism; CTP biosynthesis via de novo pathway; CTP from UDP: step 2/2. With respect to regulation, allosterically activated by GTP, when glutamine is the substrate; GTP has no effect on the reaction when ammonia is the substrate. The allosteric effector GTP functions by stabilizing the protein conformation that binds the tetrahedral intermediate(s) formed during glutamine hydrolysis. Inhibited by the product CTP, via allosteric rather than competitive inhibition. In terms of biological role, catalyzes the ATP-dependent amination of UTP to CTP with either L-glutamine or ammonia as the source of nitrogen. Regulates intracellular CTP levels through interactions with the four ribonucleotide triphosphates. The sequence is that of CTP synthase from Deinococcus radiodurans (strain ATCC 13939 / DSM 20539 / JCM 16871 / CCUG 27074 / LMG 4051 / NBRC 15346 / NCIMB 9279 / VKM B-1422 / R1).